The chain runs to 147 residues: uncharacterized protein (147 aa).

The chain crosses the membrane as a helical span at residues 3–23 (APMVGMVVLVVTLGAAVLALS).

It to M.tuberculosis Rv1312.

Its subcellular location is the membrane. This is an uncharacterized protein from Mycobacterium leprae (strain TN).